Consider the following 479-residue polypeptide: PTS system glucose-specific EIICB component (479 aa).

Residues 1–388 (MFKNAFSNLQ…FNLKTPGREK (388 aa)) form the PTS EIIC type-1 domain. Transmembrane regions (helical) follow at residues 15 to 35 (SLML…IGSA), 51 to 71 (AGSS…ALGF), 80 to 100 (LAAV…IPIF), 112 to 132 (YLLD…AYIF), 152 to 172 (FVPI…SIIW), 252 to 272 (GGFI…WHCA), 280 to 300 (IGGI…TEPI), 305 to 325 (ILVA…AFPI), and 356 to 376 (LFPI…YFMI). In terms of domain architecture, PTS EIIB type-1 spans 399–479 (KETALLVISI…IDNYMSNTNQ (81 aa)). The active-site Phosphocysteine intermediate; for EIIB activity is Cys421. Position 421 is a phosphocysteine (Cys421).

The protein resides in the cell inner membrane. The catalysed reaction is N(pros)-phospho-L-histidyl-[protein] + D-glucose(out) = D-glucose 6-phosphate(in) + L-histidyl-[protein]. Its function is as follows. The phosphoenolpyruvate-dependent sugar phosphotransferase system (sugar PTS), a major carbohydrate active transport system, catalyzes the phosphorylation of incoming sugar substrates concomitantly with their translocation across the cell membrane. The enzyme II complex composed of PtsG and Crr is involved in glucose transport. This chain is PTS system glucose-specific EIICB component (ptsG), found in Buchnera aphidicola subsp. Baizongia pistaciae (strain Bp).